Reading from the N-terminus, the 263-residue chain is Thiamine thiazole synthase (263 aa).

Residues S36, 55–56, G63, V127, and 157–159 each bind NAD(+); these read ER and HVD. Positions 159 and 174 each coordinate Fe cation. M228 provides a ligand contact to NAD(+). Residue R238 participates in glycine binding.

This sequence belongs to the THI4 family. Homooctamer; tetramer of dimers. It depends on Fe(2+) as a cofactor.

It carries out the reaction hydrogen sulfide + glycine + NAD(+) = ADP-5-ethyl-4-methylthiazole-2-carboxylate + nicotinamide + 3 H2O + H(+). It functions in the pathway cofactor biosynthesis; thiamine diphosphate biosynthesis. Its function is as follows. Involved in the biosynthesis of the thiazole moiety of thiamine. Catalyzes the conversion of NAD and glycine to adenosine diphosphate 5-(2-hydroxyethyl)-4-methylthiazole-2-carboxylate (ADT), an adenylated thiazole intermediate, using free sulfide as a source of sulfur. The polypeptide is Thiamine thiazole synthase (Solidesulfovibrio magneticus (strain ATCC 700980 / DSM 13731 / RS-1) (Desulfovibrio magneticus)).